Here is a 450-residue protein sequence, read N- to C-terminus: Phosphoglucosamine mutase (450 aa).

The Phosphoserine intermediate role is filled by serine 102. Mg(2+) is bound by residues serine 102, aspartate 243, aspartate 245, and aspartate 247. The residue at position 102 (serine 102) is a Phosphoserine.

This sequence belongs to the phosphohexose mutase family. It depends on Mg(2+) as a cofactor. In terms of processing, activated by phosphorylation.

It catalyses the reaction alpha-D-glucosamine 1-phosphate = D-glucosamine 6-phosphate. Catalyzes the conversion of glucosamine-6-phosphate to glucosamine-1-phosphate. The polypeptide is Phosphoglucosamine mutase (Rhizobium johnstonii (strain DSM 114642 / LMG 32736 / 3841) (Rhizobium leguminosarum bv. viciae)).